A 404-amino-acid chain; its full sequence is Deoxyguanosinetriphosphate triphosphohydrolase-like protein (404 aa).

Residues 69-217 (RLTHSLEVAQ…AGIADDIAYD (149 aa)) enclose the HD domain.

It belongs to the dGTPase family. Type 2 subfamily.

This chain is Deoxyguanosinetriphosphate triphosphohydrolase-like protein, found in Rhodopseudomonas palustris (strain BisB18).